The sequence spans 103 residues: Pyrimidine/purine nucleoside phosphorylase (103 aa).

It belongs to the nucleoside phosphorylase PpnP family.

The enzyme catalyses a purine D-ribonucleoside + phosphate = a purine nucleobase + alpha-D-ribose 1-phosphate. It carries out the reaction adenosine + phosphate = alpha-D-ribose 1-phosphate + adenine. The catalysed reaction is cytidine + phosphate = cytosine + alpha-D-ribose 1-phosphate. It catalyses the reaction guanosine + phosphate = alpha-D-ribose 1-phosphate + guanine. The enzyme catalyses inosine + phosphate = alpha-D-ribose 1-phosphate + hypoxanthine. It carries out the reaction thymidine + phosphate = 2-deoxy-alpha-D-ribose 1-phosphate + thymine. The catalysed reaction is uridine + phosphate = alpha-D-ribose 1-phosphate + uracil. It catalyses the reaction xanthosine + phosphate = alpha-D-ribose 1-phosphate + xanthine. In terms of biological role, catalyzes the phosphorolysis of diverse nucleosides, yielding D-ribose 1-phosphate and the respective free bases. Can use uridine, adenosine, guanosine, cytidine, thymidine, inosine and xanthosine as substrates. Also catalyzes the reverse reactions. The sequence is that of Pyrimidine/purine nucleoside phosphorylase from Methylococcus capsulatus (strain ATCC 33009 / NCIMB 11132 / Bath).